The following is a 1058-amino-acid chain: Carbamoyl phosphate synthase large chain (1058 aa).

Residues 1–401 form a carboxyphosphate synthetic domain region; the sequence is MPKRTDIQKI…SLLKACRSLE (401 aa). Positions 129, 169, 175, 176, 208, 210, 215, 241, 242, 243, 284, and 298 each coordinate ATP. One can recognise an ATP-grasp 1 domain in the interval 133–327; sequence KQLMEELEQP…IAKLAAKIAV (195 aa). Positions 284, 298, and 300 each coordinate Mg(2+). Residues glutamine 284, glutamate 298, and asparagine 300 each contribute to the Mn(2+) site. An oligomerization domain region spans residues 402–546; that stretch reads IGVHHNEIPE…YSTYGWENES (145 aa). Residues 547–929 are carbamoyl phosphate synthetic domain; sequence IRSDKESVLV…ALYKAFEASY (383 aa). Residues 671–861 enclose the ATP-grasp 2 domain; sequence EQALKELDIP…MAQVATKLIL (191 aa). Positions 707, 746, 748, 752, 777, 778, 779, 780, 820, and 832 each coordinate ATP. Mg(2+)-binding residues include glutamine 820, glutamate 832, and asparagine 834. Positions 820, 832, and 834 each coordinate Mn(2+). An MGS-like domain is found at 930 to 1058; it reads LHLPTFGNVV…ESRSFVTEAI (129 aa). Residues 930–1058 are allosteric domain; the sequence is LHLPTFGNVV…ESRSFVTEAI (129 aa).

The protein belongs to the CarB family. As to quaternary structure, composed of two chains; the small (or glutamine) chain promotes the hydrolysis of glutamine to ammonia, which is used by the large (or ammonia) chain to synthesize carbamoyl phosphate. Tetramer of heterodimers (alpha,beta)4. Mg(2+) serves as cofactor. Mn(2+) is required as a cofactor.

The enzyme catalyses hydrogencarbonate + L-glutamine + 2 ATP + H2O = carbamoyl phosphate + L-glutamate + 2 ADP + phosphate + 2 H(+). The catalysed reaction is hydrogencarbonate + NH4(+) + 2 ATP = carbamoyl phosphate + 2 ADP + phosphate + 2 H(+). It functions in the pathway amino-acid biosynthesis; L-arginine biosynthesis; carbamoyl phosphate from bicarbonate: step 1/1. It participates in pyrimidine metabolism; UMP biosynthesis via de novo pathway; (S)-dihydroorotate from bicarbonate: step 1/3. Functionally, large subunit of the glutamine-dependent carbamoyl phosphate synthetase (CPSase). CPSase catalyzes the formation of carbamoyl phosphate from the ammonia moiety of glutamine, carbonate, and phosphate donated by ATP, constituting the first step of 2 biosynthetic pathways, one leading to arginine and/or urea and the other to pyrimidine nucleotides. The large subunit (synthetase) binds the substrates ammonia (free or transferred from glutamine from the small subunit), hydrogencarbonate and ATP and carries out an ATP-coupled ligase reaction, activating hydrogencarbonate by forming carboxy phosphate which reacts with ammonia to form carbamoyl phosphate. The polypeptide is Carbamoyl phosphate synthase large chain (Streptococcus pneumoniae serotype 2 (strain D39 / NCTC 7466)).